The chain runs to 485 residues: Trigger factor (485 aa).

The 86-residue stretch at 171–256 (GDRVVIDFVG…VKAVKAPGEA (86 aa)) folds into the PPIase FKBP-type domain. Residues 443 to 485 (FADDEDEAAEAAAPASEAGASKGVISEGVISEGSAPSHETGAA) form a disordered region. Residues 452–462 (EAAAPASEAGA) show a composition bias toward low complexity.

This sequence belongs to the FKBP-type PPIase family. Tig subfamily.

It localises to the cytoplasm. The enzyme catalyses [protein]-peptidylproline (omega=180) = [protein]-peptidylproline (omega=0). Its function is as follows. Involved in protein export. Acts as a chaperone by maintaining the newly synthesized protein in an open conformation. Functions as a peptidyl-prolyl cis-trans isomerase. The polypeptide is Trigger factor (Methylobacterium sp. (strain 4-46)).